Consider the following 201-residue polypeptide: Imidazoleglycerol-phosphate dehydratase (201 aa).

It belongs to the imidazoleglycerol-phosphate dehydratase family.

Its subcellular location is the cytoplasm. It carries out the reaction D-erythro-1-(imidazol-4-yl)glycerol 3-phosphate = 3-(imidazol-4-yl)-2-oxopropyl phosphate + H2O. It functions in the pathway amino-acid biosynthesis; L-histidine biosynthesis; L-histidine from 5-phospho-alpha-D-ribose 1-diphosphate: step 6/9. The chain is Imidazoleglycerol-phosphate dehydratase from Prochlorococcus marinus (strain MIT 9301).